Reading from the N-terminus, the 370-residue chain is Glutamine synthetase (370 aa).

Position 2 is an N-acetylalanine (Ala2). At Ser5 the chain carries Phosphoserine. Residues 24-103 form the GS beta-grasp domain; the sequence is IIAEYVWIDG…VLAACYNNDG (80 aa). The region spanning 110–370 is the GS catalytic domain; it reads HRHEAAKLFA…MTKEFERESS (261 aa). Glycyl lysine isopeptide (Lys-Gly) (interchain with G-Cter in ubiquitin) cross-links involve residues Lys283, Lys324, and Lys363.

Belongs to the glutamine synthetase family. Homooctamer.

Its subcellular location is the cytoplasm. It carries out the reaction L-glutamate + NH4(+) + ATP = L-glutamine + ADP + phosphate + H(+). The protein is Glutamine synthetase (GLN1) of Saccharomyces cerevisiae (strain ATCC 204508 / S288c) (Baker's yeast).